Consider the following 441-residue polypeptide: Arginine biosynthesis bifunctional protein ArgJ, mitochondrial (441 aa).

Substrate contacts are provided by T177, K203, T214, E303, N436, and S441. Catalysis depends on T214, which acts as the Nucleophile.

The protein belongs to the ArgJ family. As to quaternary structure, heterodimer of an alpha and a beta chain. The alpha and beta chains are autoproteolytically processed from a single precursor protein within the mitochondrion.

It localises to the mitochondrion matrix. The catalysed reaction is N(2)-acetyl-L-ornithine + L-glutamate = N-acetyl-L-glutamate + L-ornithine. It carries out the reaction L-glutamate + acetyl-CoA = N-acetyl-L-glutamate + CoA + H(+). It functions in the pathway amino-acid biosynthesis; L-arginine biosynthesis; L-ornithine and N-acetyl-L-glutamate from L-glutamate and N(2)-acetyl-L-ornithine (cyclic): step 1/1. The protein operates within amino-acid biosynthesis; L-arginine biosynthesis; N(2)-acetyl-L-ornithine from L-glutamate: step 1/4. Its function is as follows. Catalyzes two activities which are involved in the cyclic version of arginine biosynthesis: the synthesis of acetylglutamate from glutamate and acetyl-CoA, and of ornithine by transacetylation between acetylornithine and glutamate. The protein is Arginine biosynthesis bifunctional protein ArgJ, mitochondrial of Debaryomyces hansenii (strain ATCC 36239 / CBS 767 / BCRC 21394 / JCM 1990 / NBRC 0083 / IGC 2968) (Yeast).